The following is a 340-amino-acid chain: Nitrilase (340 aa).

A CN hydrolase domain is found at 7-273; the sequence is IRAAAVQIAP…EGMVVADLDM (267 aa). Glutamate 47 functions as the Proton acceptor in the catalytic mechanism. The active site involves lysine 129. Cysteine 163 (nucleophile) is an active-site residue.

Belongs to the carbon-nitrogen hydrolase superfamily. Nitrilase family. In terms of assembly, forms oligomers.

It catalyses the reaction a nitrile + 2 H2O = a carboxylate + NH4(+). The enzyme catalyses phenylpropanonitrile + 2 H2O = 3-phenylpropanoate + NH4(+). It carries out the reaction an aliphatic nitrile + 2 H2O = a carboxylate + NH4(+). Its activity is regulated as follows. Highly resistant to various miscible cosolvents and tolerates high substrate concentrations. Functionally, catalyzes the hydrolysis of a broad range of nitriles to yield their corresponding carboxylic acid and ammonia. In vitro, shows high activity toward benzylic/unsaturated nitriles. The preferred substrate is trans-cinnamonitrile, followed by mono/di-cyanopyridines and aromatic substituted nitriles, with a moderate activity toward 3-phenylpropionitrile. Shows weaker activity toward the common dinitrile fumaronitrile. Also shows weak activity toward some aliphatic nitriles, including adiponitrile and glutaronitrile, and the arylacetonitrile 2-thiopheneacetonitrile. The chain is Nitrilase from Paraburkholderia phymatum (strain DSM 17167 / CIP 108236 / LMG 21445 / STM815) (Burkholderia phymatum).